A 478-amino-acid polypeptide reads, in one-letter code: 3-isopropylmalate dehydratase large subunit (478 aa).

The [4Fe-4S] cluster site is built by Cys355, Cys415, and Cys418.

This sequence belongs to the aconitase/IPM isomerase family. LeuC type 1 subfamily. Heterodimer of LeuC and LeuD. Requires [4Fe-4S] cluster as cofactor.

It catalyses the reaction (2R,3S)-3-isopropylmalate = (2S)-2-isopropylmalate. It functions in the pathway amino-acid biosynthesis; L-leucine biosynthesis; L-leucine from 3-methyl-2-oxobutanoate: step 2/4. Functionally, catalyzes the isomerization between 2-isopropylmalate and 3-isopropylmalate, via the formation of 2-isopropylmaleate. In Paracoccus denitrificans (strain Pd 1222), this protein is 3-isopropylmalate dehydratase large subunit.